The primary structure comprises 575 residues: Regulatory protein zeste (575 aa).

Residues 1–26 show a composition bias toward gly residues; that stretch reads MSAQGEGGGAGGSGGGGAGSDGGGNA. 2 disordered regions span residues 1–53 and 151–174; these read MSAQ…LPLT and SVAS…VKVE. A hydrophobic region spans residues 2–47; the sequence is SAQGEGGGAGGSGGGGAGSDGGGNAGQSSTGSGTVAVTNGGNSSAK. Polar residues predominate over residues 31–51; it reads TGSGTVAVTNGGNSSAKNQLP. Residues 48–128 mediate DNA binding; sequence NQLPLTPRFT…WLNSRLRKQY (81 aa). The segment covering 151 to 164 has biased composition (low complexity); it reads SVASAVPQQQQQQH.

Self-associates forming complexes of several hundred monomers.

The protein resides in the nucleus. In terms of biological role, involved in transvection phenomena (= synapsis-dependent gene expression), where the synaptic pairing of chromosomes carrying genes with which zeste interacts influences the expression of these genes. Zeste binds to DNA and stimulates transcription from a nearby promoter. The polypeptide is Regulatory protein zeste (z) (Drosophila melanogaster (Fruit fly)).